Reading from the N-terminus, the 404-residue chain is MLFESIYIQCLNKFSKYKKFVCHTTCNCPNYKIIGYLLYFLCLCRPINCSLPLSRHDLAFGSFSYYLTMFLYRILVRLLQFYYFVKFSAILFLGFAVKGRSLFEKKQREKPNVLEGWDSRYIKLKKVRLHYVQTGSDDKPLMLFIHGYPEFWYSWRFQLKEFADKYRCVAIDQRGYNLSDKPKHVDNYSIDELTGDIRDVIEGLGYDKAIVVAHDWGGLVAWQFAEQYPEMVDKLICCNIPRPGSFRKRIYTSWSQFRKSWYMFFYQNEKIPEMLCSADDMKMLELCFRAKEIGIQNNKNFTDEDLEAWKYSFSMNGASFKYPINYYRNIFNAKKQQADLVLEMPTLIIWGTADGALDIEAAVDSLNTLKQGTMKKIEGASHWVQQDEPEMVNEHIKKFLNKYQ.

The chain crosses the membrane as a helical span at residues 74–96 (ILVRLLQFYYFVKFSAILFLGFA). The 250-residue stretch at 140-389 (PLMLFIHGYP…ASHWVQQDEP (250 aa)) folds into the AB hydrolase-1 domain. The Nucleophile role is filled by Asp-215. The active-site Proton donor is Tyr-327. His-382 serves as the catalytic Proton acceptor.

This sequence belongs to the AB hydrolase superfamily. Epoxide hydrolase family.

It is found in the membrane. It carries out the reaction an epoxide + H2O = an ethanediol. It catalyses the reaction 8,9-epoxy-(5Z,11Z,14Z)-eicosatrienoate + H2O = 8,9-dihydroxy-(5Z,11Z,14Z)-eicosatrienoate. The enzyme catalyses 11,12-epoxy-(5Z,8Z,14Z)-eicosatrienoate + H2O = 11,12-dihydroxy-(5Z,8Z,14Z)-eicosatrienoate. The catalysed reaction is 14,15-epoxy-(5Z,8Z,11Z)-eicosatrienoate + H2O = 14,15-dihydroxy-(5Z,8Z,11Z)-eicosatrienoate. It carries out the reaction 12,13-epoxy-(9Z)-octadecenoate + H2O = 12,13-dihydroxy-(9Z)-octadecenoate. It catalyses the reaction 9,10-epoxy-(12Z)-octadecenoate + H2O = 9,10-dihydroxy-(12Z)-octadecenoate. It functions in the pathway lipid metabolism. Catalyzes the hydrolysis of epoxide-containing fatty acids. Active against epoxyeicosatrienoic acids (EETs) including 8,9-epoxy-(5Z,11Z,14Z)-eicosatrienoate (8,9-EET), 11,12-epoxy-(5Z,8Z,14Z)-eicosatrienoate (11,12-EET) and 14,15-epoxy-(5Z,8Z,11Z)-eicosatrienoate (14,15-EET) and the linoleic acid metabolites 12,13-epoxy-(9Z)-octadecenoate (12,13-EpOME) and 9,10-epoxy-(12Z)-octadecenoate (9,10-EpOME). These epoxides function as lipid signaling molecules, the enzyme can deplete the supply of the epoxide signal by transforming them into diol species that are more readily eliminated through excretion. This is Epoxide hydrolase 1 from Caenorhabditis elegans.